A 118-amino-acid polypeptide reads, in one-letter code: Immunoglobulin heavy variable 4-30-2 (118 aa).

An N-terminal signal peptide occupies residues 1–19; that stretch reads MKHLWFFLLLVAAPRWVLS. Residues 20–44 form a framework-1 region; the sequence is QLQLQESGSGLVKPSQTLSLTCAVS. Positions 20 to 118 constitute an Ig-like domain; the sequence is QLQLQESGSG…ADTAVYYCAR (99 aa). The cysteines at positions 41 and 116 are disulfide-linked. Positions 45 to 54 are complementarity-determining-1; sequence GGSISSGGYS. The segment at 55–71 is framework-2; sequence WSWIRQPPGKGLEWIGY. The segment at 72–78 is complementarity-determining-2; it reads IYHSGST. Positions 79 to 116 are framework-3; the sequence is YYNPSLKSRVTISVDRSKNQFSLKLSSVTAADTAVYYC. The interval 117–118 is complementarity-determining-3; sequence AR.

Immunoglobulins are composed of two identical heavy chains and two identical light chains; disulfide-linked.

The protein localises to the secreted. It localises to the cell membrane. Its function is as follows. V region of the variable domain of immunoglobulin heavy chains that participates in the antigen recognition. Immunoglobulins, also known as antibodies, are membrane-bound or secreted glycoproteins produced by B lymphocytes. In the recognition phase of humoral immunity, the membrane-bound immunoglobulins serve as receptors which, upon binding of a specific antigen, trigger the clonal expansion and differentiation of B lymphocytes into immunoglobulins-secreting plasma cells. Secreted immunoglobulins mediate the effector phase of humoral immunity, which results in the elimination of bound antigens. The antigen binding site is formed by the variable domain of one heavy chain, together with that of its associated light chain. Thus, each immunoglobulin has two antigen binding sites with remarkable affinity for a particular antigen. The variable domains are assembled by a process called V-(D)-J rearrangement and can then be subjected to somatic hypermutations which, after exposure to antigen and selection, allow affinity maturation for a particular antigen. This chain is Immunoglobulin heavy variable 4-30-2, found in Homo sapiens (Human).